We begin with the raw amino-acid sequence, 400 residues long: Phosphoglycerate kinase (400 aa).

Substrate contacts are provided by residues aspartate 22–asparagine 24, arginine 38, histidine 61–arginine 64, arginine 119, and arginine 152. ATP is bound by residues lysine 205, glycine 296, glutamate 327, and glycine 353–threonine 356.

The protein belongs to the phosphoglycerate kinase family. As to quaternary structure, monomer.

It localises to the cytoplasm. It catalyses the reaction (2R)-3-phosphoglycerate + ATP = (2R)-3-phospho-glyceroyl phosphate + ADP. The protein operates within carbohydrate degradation; glycolysis; pyruvate from D-glyceraldehyde 3-phosphate: step 2/5. The polypeptide is Phosphoglycerate kinase (Campylobacter lari (strain RM2100 / D67 / ATCC BAA-1060)).